The following is a 234-amino-acid chain: DNA repair and recombination protein RadB (234 aa).

This sequence belongs to the eukaryotic RecA-like protein family. RadB subfamily.

Its function is as follows. Involved in DNA repair and in homologous recombination. May regulate the cleavage reactions of the branch-structured DNA. Has a very weak ATPase activity that is not stimulated by DNA. Binds DNA but does not promote DNA strands exchange. The protein is DNA repair and recombination protein RadB of Methanobrevibacter smithii (strain ATCC 35061 / DSM 861 / OCM 144 / PS).